A 243-amino-acid polypeptide reads, in one-letter code: Adenosine 5'-phosphosulfate reductase (243 aa).

Belongs to the PAPS reductase family. CysH subfamily. It depends on [4Fe-4S] cluster as a cofactor.

It is found in the cytoplasm. The catalysed reaction is [thioredoxin]-disulfide + sulfite + AMP + 2 H(+) = adenosine 5'-phosphosulfate + [thioredoxin]-dithiol. Its pathway is sulfur metabolism; hydrogen sulfide biosynthesis; sulfite from sulfate. Catalyzes the formation of sulfite from adenosine 5'-phosphosulfate (APS) using thioredoxin as an electron donor. This is Adenosine 5'-phosphosulfate reductase from Staphylococcus haemolyticus (strain JCSC1435).